Reading from the N-terminus, the 1385-residue chain is Serine-aspartate repeat-containing protein D (1385 aa).

A signal peptide spans 1 to 35 (MLNRENKTAITRKGMVSNRLNKFSIRKYTVGTASI). The YSIRK-G/S signaling motif motif lies at 23–34 (FSIRKYTVGTAS). Residues 36–568 (LVGTTLIFGL…NNQSGGAGQE (533 aa)) are ligand binding A region. 2 disordered regions span residues 54-162 (ESTN…DLLE) and 200-224 (ETLVDNNSNSNNENNADIILPKSTA). Composition is skewed to polar residues over residues 62–71 (EATTSASDNQ) and 94–109 (EMVSSQGNETTSNGNK). A compositionally biased stretch (basic and acidic residues) spans 130 to 145 (KSDEQASPKSTNEDLN). A compositionally biased stretch (polar residues) spans 146–155 (TKQTISNQEG). A compositionally biased stretch (low complexity) spans 205–214 (NNSNSNNENN). CNA-B domains follow at residues 569 to 680 (VYKI…IYKP), 681 to 791 (KYNL…YKTP), 792 to 901 (KYNL…FYKP), 902 to 1012 (TYNL…YKTP), and 1013 to 1123 (KYSL…EEET). 3 disordered regions span residues 856 to 886 (FETPSGYTPTQVGSGTDEGIDSNGTSTTGVI), 972 to 992 (YTPTSVTSGNDTEKDSNGLTT), and 1077 to 1361 (FEKP…SNNA). 2 stretches are compositionally biased toward polar residues: residues 860-869 (SGYTPTQVGS) and 972-981 (YTPTSVTSGN). Over residues 1081-1090 (TGLTQTGTNT) the composition is skewed to low complexity. 2 stretches are compositionally biased toward acidic residues: residues 1091 to 1101 (TEDDKDADGGE) and 1118 to 1324 (YYEE…DSDS). The short motif at 1348-1352 (LPETG) is the LPXTG sorting signal element. At T1351 the chain carries Pentaglycyl murein peptidoglycan amidated threonine. The propeptide at 1352-1385 (GNENSGSNNATLFGGLFAALGSLLLFGRRKKQNK) is removed by sortase.

This sequence belongs to the serine-aspartate repeat-containing protein (SDr) family. Interacts with host DSG1; this interaction increases S.aureus adherence to keratinocytes.

Its subcellular location is the secreted. It is found in the cell wall. Functionally, cell surface-associated calcium-binding protein which plays an important role in adhesion and pathogenesis. Mediates interactions with components of the extracellular matrix such as host DSG1 to promote bacterial adhesion to host cells. Contributes to the resistance to killing by innate immune components such as neutrophils present in blood and thus attenuates bacterial clearance. This Staphylococcus aureus (strain Mu50 / ATCC 700699) protein is Serine-aspartate repeat-containing protein D (sdrD).